Reading from the N-terminus, the 144-residue chain is 3-hydroxyacyl-[acyl-carrier-protein] dehydratase FabZ (144 aa).

Histidine 48 is a catalytic residue.

It belongs to the thioester dehydratase family. FabZ subfamily.

It is found in the cytoplasm. The catalysed reaction is a (3R)-hydroxyacyl-[ACP] = a (2E)-enoyl-[ACP] + H2O. In terms of biological role, involved in unsaturated fatty acids biosynthesis. Catalyzes the dehydration of short chain beta-hydroxyacyl-ACPs and long chain saturated and unsaturated beta-hydroxyacyl-ACPs. The chain is 3-hydroxyacyl-[acyl-carrier-protein] dehydratase FabZ from Bacillus licheniformis (strain ATCC 14580 / DSM 13 / JCM 2505 / CCUG 7422 / NBRC 12200 / NCIMB 9375 / NCTC 10341 / NRRL NRS-1264 / Gibson 46).